The following is a 270-amino-acid chain: Undecaprenyl-diphosphatase 3 (270 aa).

7 consecutive transmembrane segments (helical) span residues 5-25 (YYILKYLILGLFQGLTEPIPI), 42-62 (IEGFSFELLVNSASLLAVLLI), 89-109 (FFFIIYLVIATIPAGVIGVLF), 117-137 (LKGVKMVGISLLITAVGLWII), 192-212 (FSFLLYIPVSLGGLLLSITDI), 220-240 (TLFVPYIVAFIATFIMTYISL), and 250-270 (GNLKYFSFYCIIVGVLTLIFL).

The protein belongs to the UppP family.

The protein resides in the cell membrane. It carries out the reaction di-trans,octa-cis-undecaprenyl diphosphate + H2O = di-trans,octa-cis-undecaprenyl phosphate + phosphate + H(+). Its function is as follows. Catalyzes the dephosphorylation of undecaprenyl diphosphate (UPP). Confers resistance to bacitracin. The sequence is that of Undecaprenyl-diphosphatase 3 from Bacillus anthracis.